The primary structure comprises 633 residues: Protein BZZ1 (633 aa).

The F-BAR domain occupies 5–271 (LSIGNEIKDS…VVKQNKPSLN (267 aa)). Positions 138–210 (DMVNKKDNIY…INQANRTKDK (73 aa)) form a coiled coil. 4 positions are modified to phosphoserine: serine 327, serine 463, serine 472, and serine 476. The tract at residues 429–495 (VDSKPSSGGS…KKTTQNSSDD (67 aa)) is disordered. Residues 474 to 493 (NNSIRTTSTNNTKKTTQNSS) are compositionally biased toward low complexity. 2 SH3 domains span residues 493 to 555 (SDDG…ISSA) and 577 to 633 (LPVR…SYCK).

Belongs to the BZZ1 family. Interacts with LAS17 and MYO5.

It is found in the cytoplasm. Its subcellular location is the cytoskeleton. The protein localises to the actin patch. In terms of biological role, plays a role in endocytosis and trafficking to the vacuole. Functions with type I myosins to restore polarity of the actin cytoskeleton after NaCl stress. The chain is Protein BZZ1 (BZZ1) from Saccharomyces cerevisiae (strain ATCC 204508 / S288c) (Baker's yeast).